Reading from the N-terminus, the 366-residue chain is MVIKFLSALILLLVTTAAQAERIRDLTSVQGVRQNSLIGYGLVVGLDGTGDQTTQTPFTTQTLNNMLSQLGITVPTGTNMQLKNVAAVMVTASLPPFGRQGQTIDVVVSSMGNAKSLRGGTLLMTPLKGVDSQVYALAQGNILVGGAGASAGGSSVQVNQLNGGRITNGAVIERELPSQFGVGNTLNLQLNDEDFSMAQQIADTINRVRGYGSATALDARTIQVRVPSGNSSQVRFLADIQNMQVNVTPQDAKVVINLRTGSVVMNREVTLDSCAVAQGNLSVTVNRQANVSQPDTPFGGGQTVVTPQTQIDLRQSGGSLQSVRSSASLNNVVRALNALGATPMDLMSILQSMQSAGCLRAKLEII.

A signal peptide spans 1 to 20 (MVIKFLSALILLLVTTAAQA).

Belongs to the FlgI family. As to quaternary structure, the basal body constitutes a major portion of the flagellar organelle and consists of four rings (L,P,S, and M) mounted on a central rod.

It localises to the periplasm. The protein localises to the bacterial flagellum basal body. Functionally, assembles around the rod to form the L-ring and probably protects the motor/basal body from shearing forces during rotation. The sequence is that of Flagellar P-ring protein from Escherichia coli O1:K1 / APEC.